The primary structure comprises 279 residues: MKIIRTLFLLLIAVYGSSVVAKPMLKATFSSTTMYYGIGPNSDKSIVAEVTIATPEGVYYGSWNLSGHRKGETLTADSWSGPEPAPKVVLKDFDNTVSRSACKNLPSNWRGCGSFTLEITVQSDDYGCPWLASSHIVATTFITNETYSPPDTRSSVCPKVPVDTFDISWDANVSKQKTTLMLDATGGTVNRTLHTYLMEGGKLCDGSKFDNRGAYCRFVSSGITLNVLGCDQSSVTTSAVDHPITDVELHDINVAVNTRNIGSGQFTSTCSFQYIIDEL.

The signal sequence occupies residues 1 to 21; it reads MKIIRTLFLLLIAVYGSSVVA.

The protein to E.coli YfcO.

This is an uncharacterized protein from Salmonella typhimurium (strain LT2 / SGSC1412 / ATCC 700720).